Here is a 200-residue protein sequence, read N- to C-terminus: MGSQSSKAPRGDVTAEEAAGASPAKANGQENGHVRSNGDLTPKGEGESPPVNGTDEAAGATGDAIEPAPPSQEAEAKGEVAPKETPKKKKKFSFKKPFKLSGLSFKRNRKEGGGDSSASSPTEEEQEQGEMSACSDEGTAQEGKAAATPESQEPQAKGAEASAASKEGDTEEEAGPQAAEPSTPSGPESGPTPASAEQNE.

Residues 1–200 form a disordered region; the sequence is MGSQSSKAPR…PTPASAEQNE (200 aa). The N-myristoyl glycine moiety is linked to residue Gly2. Residue Thr14 is modified to Phosphothreonine. A compositionally biased stretch (low complexity) spans 16–26; sequence EEAAGASPAKA. Phosphoserine is present on residues Ser22, Ser36, and Ser48. The span at 53–64 shows a compositional bias: low complexity; that stretch reads GTDEAAGATGDA. At Ser71 the chain carries Phosphoserine. Positions 74 to 85 are enriched in basic and acidic residues; it reads AEAKGEVAPKET. Thr85 carries the post-translational modification Phosphothreonine. The span at 86–98 shows a compositional bias: basic residues; sequence PKKKKKFSFKKPF. Positions 87-110 are effector domain involved in lipid-binding and calmodulin-binding; the sequence is KKKKKFSFKKPFKLSGLSFKRNRK. A phosphoserine; by PKC mark is found at Ser93, Ser101, and Ser104. Ser119 is modified (phosphoserine). A Phosphoserine; by MAPK8 modification is found at Ser120. Ser132 and Ser135 each carry phosphoserine. Thr148 carries the phosphothreonine; by MAPK8 modification. Phosphoserine occurs at positions 151, 162, and 165. Positions 156–165 are enriched in low complexity; the sequence is AKGAEASAAS. Thr170 is modified (phosphothreonine). Positions 178–200 are enriched in low complexity; that stretch reads AAEPSTPSGPESGPTPASAEQNE. The residue at position 183 (Thr183) is a Phosphothreonine; by MAPK8. Thr192 is modified (phosphothreonine).

This sequence belongs to the MARCKS family. In terms of assembly, binds to filamentous actin (F-actin), but not to monomeric G-actin, independently of its phosphorylation status. Interacts with calmodulin. Phosphorylated. Phosphorylation at Ser-120 and Thr-183 is non-redundantly catalyzed by MAPK8 in vivo. Phosphorylation at Thr-148 is preferentially catalyzed by MAPK8 in vivo, but this modification can also be catalyzed by other kinases in the absence of MAPK8. May be phosphorylated by protein kinase C, which disrupts the interaction with calmodulin. Expressed at high levels in brain cortex and hippocampus, including dentate gyrus, anterior olfactory nucleus, primary olfactory cortex, entorhinal cortex, medial preoptic area and dorsomedial hypothalamic nucleus (at protein level). Expressed in neuronal cells (at protein level). Detected in the retina. Strongly expressed in testis and uterus; expressed at lower levels in cerebellum, cerebrum, adipose tissue, spleen, kidney, thyroid, liver, lung, skeletal muscle and heart. Detected in T-cells and B-cells.

It is found in the cytoplasm. The protein resides in the cytoskeleton. It localises to the cell membrane. Functionally, involved in the control of cell movement by regulating actin cytoskeleton homeostasis and filopodium and lamellipodium formation. When unphosphorylated, induces cell migration. When phosphorylated by MAPK8, induces actin bundles formation and stabilization, thereby reducing actin plasticity, hence restricting cell movement, including neuronal migration. May be involved in coupling the protein kinase C and calmodulin signal transduction systems. This Mus musculus (Mouse) protein is MARCKS-related protein (Marcksl1).